Consider the following 260-residue polypeptide: Crotonyl-CoA hydratase (260 aa).

Catalysis depends on glutamate 114, which acts as the Nucleophile. Glutamate 134 functions as the Proton acceptor in the catalytic mechanism.

This sequence belongs to the enoyl-CoA hydratase/isomerase family. In terms of assembly, homotetramer.

It is found in the cytoplasm. It catalyses the reaction 3-hydroxybutanoyl-CoA = (2E)-butenoyl-CoA + H2O. It carries out the reaction a short-chain (3S)-3-hydroxyacyl-CoA = a short-chain (2E)-enoyl-CoA + H2O. It functions in the pathway lipid metabolism; butanoate metabolism. Functionally, involved in syntrophic growth of S.wolfei with butyrate, as part of the butyrate oxidation pathway. Probably catalyzes the hydration of crotonyl-CoA to 3-hydroxybutyryl-CoA. The sequence is that of Crotonyl-CoA hydratase from Syntrophomonas wolfei subsp. wolfei (strain DSM 2245B / Goettingen).